The sequence spans 1502 residues: E3 ubiquitin-protein ligase UPL4 (1502 aa).

Over residues 1 to 21 the composition is skewed to basic and acidic residues; the sequence is MENRGQKRMEVVEELPADKRA. The tract at residues 1–107 is disordered; that stretch reads MENRGQKRME…DYQRQRSSGD (107 aa). A compositionally biased stretch (polar residues) spans 22 to 46; that stretch reads CNSQDFRPSTSGSSVQAQANDTNPG. Positions 67 to 90 are enriched in acidic residues; sequence DEEEQEEQDKEDSDYGSCDSDEED. Residues 91 to 107 show a composition bias toward basic and acidic residues; the sequence is PRQRVLQDYQRQRSSGD. ARM repeat units lie at residues 143–183, 186–226, 228–265, and 267–306; these read EESL…YLCD, PPSV…KISR, EPVA…NICK, and LSSE…KIAD. The interval 833–881 is disordered; it reads CQAESSSPMEIDSESSDASQLQGSQVEDQTQLPGQQNASSSETSSEKED. Polar residues predominate over residues 849 to 875; it reads DASQLQGSQVEDQTQLPGQQNASSSET. The interval 1022–1096 is K-box; it reads RPVPHSEFVS…IRHHPQHLSS (75 aa). Residues 1128–1502 enclose the HECT domain; the sequence is KMMELYGNQK…TEGQGSFHLS (375 aa). C1469 acts as the Glycyl thioester intermediate in catalysis.

The protein belongs to the UPL family. K-HECT subfamily.

It carries out the reaction S-ubiquitinyl-[E2 ubiquitin-conjugating enzyme]-L-cysteine + [acceptor protein]-L-lysine = [E2 ubiquitin-conjugating enzyme]-L-cysteine + N(6)-ubiquitinyl-[acceptor protein]-L-lysine.. The protein operates within protein modification; protein ubiquitination. Probable E3 ubiquitin-protein ligase which mediates ubiquitination and subsequent proteasomal degradation of target proteins. The protein is E3 ubiquitin-protein ligase UPL4 (UPL4) of Arabidopsis thaliana (Mouse-ear cress).